The primary structure comprises 371 residues: Glycerol-3-phosphate dehydrogenase [NAD(+)] 2 (371 aa).

Residues 18-23 (GSGNWG), F50, and F106 contribute to the NAD(+) site. K129 lines the substrate pocket. A162 is an NAD(+) binding site. The Proton acceptor role is filled by K222. 2 residues coordinate NAD(+): R294 and Q323. 294-295 (RN) provides a ligand contact to substrate.

Belongs to the NAD-dependent glycerol-3-phosphate dehydrogenase family. Interacts with human CFH/complement factor H; the interaction is direct and enables the pathogen to evade the host innate immune system. Interacts with human CFHR1/complement factor H-related protein 1; the interaction is direct. Interacts with human PLG/plasminogen; the interaction is direct and provides active plasmin on the surface of fungal cells.

The protein resides in the secreted. It is found in the cell wall. Its subcellular location is the cytoplasm. It localises to the peroxisome. It catalyses the reaction sn-glycerol 3-phosphate + NAD(+) = dihydroxyacetone phosphate + NADH + H(+). Functionally, may catalyze the production and accumulation of glycerol during hyperosmotic stress conditions. Glycerol acts as a osmoregulator that prevents loss of water and turgor of the cells. Mediates evasion of the host innate immune system by binding inhibitory components of the host alternative complement system, in a manner dependent on estrogen-induced inhibition of EBP1. The polypeptide is Glycerol-3-phosphate dehydrogenase [NAD(+)] 2 (Candida albicans (strain SC5314 / ATCC MYA-2876) (Yeast)).